The sequence spans 681 residues: DNA-directed RNA polymerase subunit beta' (681 aa).

Residues cysteine 69, cysteine 71, cysteine 87, and cysteine 90 each coordinate Zn(2+). Mg(2+) is bound by residues aspartate 489, aspartate 491, and aspartate 493.

Belongs to the RNA polymerase beta' chain family. RpoC1 subfamily. In terms of assembly, in plastids the minimal PEP RNA polymerase catalytic core is composed of four subunits: alpha, beta, beta', and beta''. When a (nuclear-encoded) sigma factor is associated with the core the holoenzyme is formed, which can initiate transcription. It depends on Mg(2+) as a cofactor. The cofactor is Zn(2+).

The protein localises to the plastid. It localises to the chloroplast. It carries out the reaction RNA(n) + a ribonucleoside 5'-triphosphate = RNA(n+1) + diphosphate. In terms of biological role, DNA-dependent RNA polymerase catalyzes the transcription of DNA into RNA using the four ribonucleoside triphosphates as substrates. The protein is DNA-directed RNA polymerase subunit beta' of Atropa belladonna (Belladonna).